The following is a 226-amino-acid chain: Enolase-phosphatase E1 (226 aa).

Belongs to the HAD-like hydrolase superfamily. MasA/MtnC family. In terms of assembly, monomer. Requires Mg(2+) as cofactor.

It carries out the reaction 5-methylsulfanyl-2,3-dioxopentyl phosphate + H2O = 1,2-dihydroxy-5-(methylsulfanyl)pent-1-en-3-one + phosphate. Its pathway is amino-acid biosynthesis; L-methionine biosynthesis via salvage pathway; L-methionine from S-methyl-5-thio-alpha-D-ribose 1-phosphate: step 3/6. The protein operates within amino-acid biosynthesis; L-methionine biosynthesis via salvage pathway; L-methionine from S-methyl-5-thio-alpha-D-ribose 1-phosphate: step 4/6. Its function is as follows. Bifunctional enzyme that catalyzes the enolization of 2,3-diketo-5-methylthiopentyl-1-phosphate (DK-MTP-1-P) into the intermediate 2-hydroxy-3-keto-5-methylthiopentenyl-1-phosphate (HK-MTPenyl-1-P), which is then dephosphorylated to form the acireductone 1,2-dihydroxy-3-keto-5-methylthiopentene (DHK-MTPene). In Shewanella pealeana (strain ATCC 700345 / ANG-SQ1), this protein is Enolase-phosphatase E1.